Consider the following 327-residue polypeptide: Regulatory protein MsrR (327 aa).

A compositionally biased stretch (basic and acidic residues) spans 1–18 (MDKETNDNEYRRQSEHRT). Residues 1 to 24 (MDKETNDNEYRRQSEHRTSAPKRK) form a disordered region. Residues 1-31 (MDKETNDNEYRRQSEHRTSAPKRKKKKKIRK) lie on the Cytoplasmic side of the membrane. The helical; Signal-anchor for type II membrane protein transmembrane segment at 32–52 (LPIILLIVVILLIALVVYIVH) threads the bilayer. At 53–327 (SYNSGVEYAK…QAIKDFLDED (275 aa)) the chain is on the extracellular side.

The protein belongs to the LytR/CpsA/Psr (LCP) family.

The protein localises to the cell membrane. Its function is as follows. Involved in SarA attenuation. Affects resistance to oxacillin and teicoplanin, as well as the synthesis of virulence factors. This is Regulatory protein MsrR (msrR) from Staphylococcus aureus (strain NCTC 8325 / PS 47).